The primary structure comprises 635 residues: ATP-dependent zinc metalloprotease FtsH (635 aa).

The Cytoplasmic segment spans residues 1–4 (MVKN). Residues 5-25 (LVLWVVVAVIMMTAYQSFNSS) form a helical membrane-spanning segment. Residues 26–97 (SVENSTDYTT…VEGTPFERRG (72 aa)) lie on the Periplasmic side of the membrane. A helical membrane pass occupies residues 98–118 (FLSQILISWFPMLFLVGVWVF). The Cytoplasmic segment spans residues 119 to 635 (FMRQMQGGGG…AVENTDDFNV (517 aa)). 191-198 (GPPGTGKT) serves as a coordination point for ATP. Residue H413 coordinates Zn(2+). E414 is a catalytic residue. H417 and D491 together coordinate Zn(2+). The disordered stretch occupies residues 593–635 (NREPVTPPSGWGEPKTQQAAYANSTTNDTKPESAVENTDDFNV). Over residues 607-620 (KTQQAAYANSTTND) the composition is skewed to polar residues.

This sequence in the central section; belongs to the AAA ATPase family. In the C-terminal section; belongs to the peptidase M41 family. Homohexamer. Zn(2+) serves as cofactor.

The protein resides in the cell inner membrane. Its function is as follows. Acts as a processive, ATP-dependent zinc metallopeptidase for both cytoplasmic and membrane proteins. Plays a role in the quality control of integral membrane proteins. This chain is ATP-dependent zinc metalloprotease FtsH, found in Haemophilus influenzae (strain ATCC 51907 / DSM 11121 / KW20 / Rd).